The primary structure comprises 527 residues: Heat shock factor protein HSF8 (527 aa).

The DNA-binding element occupies Pro-39–His-133. Disordered stretches follow at residues Arg-128 to Ser-158, Asn-241 to Gln-273, and Ser-297 to Lys-341. Over residues Gly-134–Pro-152 the composition is skewed to low complexity. Residues Ser-317–Arg-326 are compositionally biased toward polar residues.

It belongs to the HSF family. In terms of assembly, homotrimer. Exhibits temperature-dependent phosphorylation.

Its subcellular location is the nucleus. Functionally, DNA-binding protein that specifically binds heat shock promoter elements (HSE) and activates transcription. This chain is Heat shock factor protein HSF8 (HSF8), found in Solanum lycopersicum (Tomato).